The sequence spans 76 residues: Adropin (76 aa).

The N-terminal stretch at Met1 to Ala33 is a signal peptide. Residues Val41–Pro76 are disordered. Residues Ser52–Lys65 are compositionally biased toward pro residues.

Expressed in liver and brain.

It localises to the secreted. Involved in the regulation of glucose homeostasis and lipid metabolism. This is Adropin (ENHO) from Homo sapiens (Human).